The chain runs to 185 residues: Ribosome maturation factor RimM (185 aa).

The region spanning 92–168 is the PRC barrel domain; it reads DDDTFYHADL…GRRVVVAEAF (77 aa).

This sequence belongs to the RimM family. In terms of assembly, binds ribosomal protein uS19.

Its subcellular location is the cytoplasm. An accessory protein needed during the final step in the assembly of 30S ribosomal subunit, possibly for assembly of the head region. Essential for efficient processing of 16S rRNA. May be needed both before and after RbfA during the maturation of 16S rRNA. It has affinity for free ribosomal 30S subunits but not for 70S ribosomes. The polypeptide is Ribosome maturation factor RimM (Xanthobacter autotrophicus (strain ATCC BAA-1158 / Py2)).